A 217-amino-acid chain; its full sequence is CASP-like protein UU4 (217 aa).

The segment covering 1–11 (MYTGQSDHRPE) has biased composition (basic and acidic residues). Residues 1-21 (MYTGQSDHRPEGVGVNPGSPN) form a disordered region. Topologically, residues 1-61 (MYTGQSDHRP…VKKNINHMSG (61 aa)) are cytoplasmic. A helical transmembrane segment spans residues 62-82 (LSLGLRVSEFVLSVIAFSLMA). Topologically, residues 83–98 (SAEQNGAVYSTFTSYS) are extracellular. A helical transmembrane segment spans residues 99–119 (FVLAINVLVALYAIGQIILSV). Over 120–141 (MPLVSGSAPKKLYLFITFGCDQ) the chain is Cytoplasmic. Residues 142 to 162 (LSAFLLMAAGAAGASVAMLIN) form a helical membrane-spanning segment. The Extracellular segment spans residues 163–187 (RKGVIDDYGSGCIDGKITVFCAHAE). A helical transmembrane segment spans residues 188–208 (ASIAFTFLSFFCVMISSYLGV). The Cytoplasmic segment spans residues 209–217 (YNLAPYLIL).

The protein belongs to the Casparian strip membrane proteins (CASP) family. As to quaternary structure, homodimer and heterodimers.

The protein resides in the cell membrane. This Physcomitrium patens (Spreading-leaved earth moss) protein is CASP-like protein UU4.